Consider the following 137-residue polypeptide: Hemoglobin subunit beta (137 aa).

The Globin domain occupies 3 to 137; the sequence is HWTQEERDEI…VIDAISKQYH (135 aa). 2 residues coordinate heme b: His54 and His83.

The protein belongs to the globin family. As to quaternary structure, heterotetramer of two alpha chains and two beta chains. As to expression, red blood cells.

Involved in oxygen transport from gills to the various peripheral tissues. The polypeptide is Hemoglobin subunit beta (HBB) (Mustelus griseus (Spotless smooth-hound)).